Reading from the N-terminus, the 411-residue chain is Serpin A3-2 (411 aa).

A signal peptide spans 1–24 (MRAERTSFLLALGLLVAGIRSVHC). Asparagine 100, asparagine 180, asparagine 230, and asparagine 264 each carry an N-linked (GlcNAc...) asparagine glycan.

Belongs to the serpin family. In terms of assembly, homodimer.

Its subcellular location is the cytoplasmic vesicle. It localises to the secretory vesicle. The protein resides in the chromaffin granule. The protein localises to the secreted. Serine protease inhibitor. The protein is Serpin A3-2 of Bos taurus (Bovine).